Consider the following 474-residue polypeptide: Cysteine--tRNA ligase (474 aa).

Residue Cys-29 coordinates Zn(2+). A 'HIGH' region motif is present at residues 31-41 (ITPYDHVHVGH). Zn(2+) is bound by residues Cys-215, His-240, and Glu-244. Positions 273 to 277 (KMSKS) match the 'KMSKS' region motif. ATP is bound at residue Lys-276.

The protein belongs to the class-I aminoacyl-tRNA synthetase family. The cofactor is Zn(2+).

It is found in the cytoplasm. The enzyme catalyses tRNA(Cys) + L-cysteine + ATP = L-cysteinyl-tRNA(Cys) + AMP + diphosphate. This Pyrobaculum aerophilum (strain ATCC 51768 / DSM 7523 / JCM 9630 / CIP 104966 / NBRC 100827 / IM2) protein is Cysteine--tRNA ligase.